Here is an 869-residue protein sequence, read N- to C-terminus: MSSIARPPDPCLVAIILIVRSRAGPRFVFHYPPNPLSENGLRGAPKARRPSRKNSKSNESSSSEDSSSTSSEDEDEAPITATAAAPATTGTATQPANATQNASHVAGSHPVAGRRSSNFGVVDDTTISGSPGGESQRAGSVGSGRGLMMRKRGTNSDAEEDAGAASDRQEDEAGPFRPPWESLLGLPADVWEKLLSPSRSWHKRRFEVGINDLAFVGWPVFVREDGTWRKQRRKKRKPRATWEGGELGHNETPGDGDGDGEGDEAGTEDDSPDRGTELIAASTETLSPKQMATTDSQRASMISVRSFRTLSEALDPDDKDCMTMFNVVFVLDPPLLEYSMRLREIYDNIIKKFSKALKWEQARTDYVWKEAQHISHIKEKAKEKRMSVNSLYSELISQSSLARAICTVFTSISASKIASVSLSPDVSISLQIPPLTSTPWLPGPTDKAYPGLWLTTADSVTPVDDPTADENTAPHQVLAKHFALLLLDNEASILKDVEASGGALAPALAHYIRCSKPTKSFAQISVSSGIPLSTIQMLASHLVYWRRARAIPPLHQRDTYIVSPNCDLSKLEVATAAYQAAFPTLPSLPKMLSAMSGTPRPYGSFIPSKDHKDTYFAILAWLLRGGWVTQLRAFARVKISPEIKMAVETALRQEEVDKYLSKRGSASDTEIREDLDDASSSSSSSLGSNGSGDETPMPGRYKRNNELDLSHSLLDQNTSLKTSSLILYPHRASPLESRWLGEVMARFPELQGDVPDGDLEYAGLRTSLKKYWPTFIKYFNGYDALEKIPVRESLKRKLVWQILMRLGLVTGQQSSIQLDPREQILKTVQFFTKTIHNFEINKTISPNPASSHVMTPRHTDGRNGTTPTN.

Positions 1–23 (MSSIARPPDPCLVAIILIVRSRA) are cleaved as a signal peptide. Disordered stretches follow at residues 31 to 180 (YPPN…RPPW), 228 to 275 (WRKQ…PDRG), 662 to 702 (KRGS…GRYK), and 842 to 869 (KTIS…TPTN). Over residues 45–55 (PKARRPSRKNS) the composition is skewed to basic residues. Low complexity-rich tracts occupy residues 57 to 70 (SNES…SSTS) and 80 to 102 (TATA…TQNA). The span at 115-129 (RSSNFGVVDDTTISG) shows a compositional bias: polar residues. A compositionally biased stretch (basic residues) spans 229 to 239 (RKQRRKKRKPR). Positions 254–271 (GDGDGDGEGDEAGTEDDS) are enriched in acidic residues. Residues 679–692 (SSSSSSSLGSNGSG) are compositionally biased toward low complexity. Residues 842-853 (KTISPNPASSHV) show a composition bias toward polar residues.

Belongs to the NPR3 family.

Functionally, mediates inactivation of the TORC1 complex in response to amino acid starvation. Required for meiotic nuclear division. The polypeptide is Nitrogen permease regulator 3 (npr3) (Aspergillus niger (strain ATCC MYA-4892 / CBS 513.88 / FGSC A1513)).